A 432-amino-acid chain; its full sequence is Pachytene checkpoint protein 2 homolog (432 aa).

Residue Met-1 is modified to N-acetylmethionine. Gly-179–Thr-186 contributes to the ATP binding site.

It belongs to the AAA ATPase family. PCH2 subfamily. As to quaternary structure, specifically interacts with the ligand binding domain of the thyroid receptor (TR). This interaction does not require the presence of thyroid hormone for its interaction. Interacts with HPV16 E1. Interacts with proteasome subunit PSMA8; to participate in meiosis progression during spermatogenesis.

In terms of biological role, plays a key role in chromosome recombination and chromosome structure development during meiosis. Required at early steps in meiotic recombination that leads to non-crossovers pathways. Also needed for efficient completion of homologous synapsis by influencing crossover distribution along the chromosomes affecting both crossovers and non-crossovers pathways. Also required for development of higher-order chromosome structures and is needed for synaptonemal-complex formation. In males, required for efficient synapsis of the sex chromosomes and for sex body formation. Promotes early steps of the DNA double-strand breaks (DSBs) repair process upstream of the assembly of RAD51 complexes. Required for depletion of HORMAD1 and HORMAD2 from synapsed chromosomes. Plays a role in mitotic spindle assembly checkpoint (SAC) activation. This Homo sapiens (Human) protein is Pachytene checkpoint protein 2 homolog (TRIP13).